We begin with the raw amino-acid sequence, 692 residues long: DNA ligase (692 aa).

NAD(+) contacts are provided by residues 34 to 38 (DAEYD), 83 to 84 (SL), and glutamate 124. Residue lysine 126 is the N6-AMP-lysine intermediate of the active site. NAD(+) is bound by residues arginine 147, glutamate 193, lysine 310, and lysine 334. Zn(2+)-binding residues include cysteine 428, cysteine 431, cysteine 446, and cysteine 452. One can recognise a BRCT domain in the interval 612–692 (AGVAGVSGKT…ALLALLAGNA (81 aa)).

Belongs to the NAD-dependent DNA ligase family. LigA subfamily. Mg(2+) serves as cofactor. It depends on Mn(2+) as a cofactor.

The catalysed reaction is NAD(+) + (deoxyribonucleotide)n-3'-hydroxyl + 5'-phospho-(deoxyribonucleotide)m = (deoxyribonucleotide)n+m + AMP + beta-nicotinamide D-nucleotide.. Its function is as follows. DNA ligase that catalyzes the formation of phosphodiester linkages between 5'-phosphoryl and 3'-hydroxyl groups in double-stranded DNA using NAD as a coenzyme and as the energy source for the reaction. It is essential for DNA replication and repair of damaged DNA. In Laribacter hongkongensis (strain HLHK9), this protein is DNA ligase.